The chain runs to 35 residues: MYDPPFLEALMITASFFAIFIIIVVSVLLLEGEGD.

The chain crosses the membrane as a helical span at residues 10-30 (LMITASFFAIFIIIVVSVLLL).

The protein resides in the membrane. This is an uncharacterized protein from Salmonella paratyphi A (strain ATCC 9150 / SARB42).